The sequence spans 504 residues: Glycerol kinase (504 aa).

Threonine 12 provides a ligand contact to ADP. The ATP site is built by threonine 12, threonine 13, and serine 14. Threonine 12 contacts sn-glycerol 3-phosphate. Arginine 16 contacts ADP. Arginine 82, glutamate 83, tyrosine 134, and aspartate 246 together coordinate sn-glycerol 3-phosphate. Arginine 82, glutamate 83, tyrosine 134, aspartate 246, and glutamine 247 together coordinate glycerol. Threonine 268 and glycine 312 together coordinate ADP. ATP contacts are provided by threonine 268, glycine 312, glutamine 316, and glycine 413. ADP-binding residues include glycine 413 and asparagine 417.

It belongs to the FGGY kinase family.

It catalyses the reaction glycerol + ATP = sn-glycerol 3-phosphate + ADP + H(+). The protein operates within polyol metabolism; glycerol degradation via glycerol kinase pathway; sn-glycerol 3-phosphate from glycerol: step 1/1. With respect to regulation, inhibited by fructose 1,6-bisphosphate (FBP). Its function is as follows. Key enzyme in the regulation of glycerol uptake and metabolism. Catalyzes the phosphorylation of glycerol to yield sn-glycerol 3-phosphate. The polypeptide is Glycerol kinase (Paenarthrobacter aurescens (strain TC1)).